A 274-amino-acid chain; its full sequence is Undecaprenyl-diphosphatase (274 aa).

Helical transmembrane passes span 44–64 (AKVF…LVYW), 85–105 (LNVL…GKAI), 109–129 (LFTP…ILWA), 185–205 (ATDY…VYSL), 215–235 (ADIP…WLCV), and 250–270 (FAWY…SGLV).

It belongs to the UppP family.

Its subcellular location is the cell inner membrane. The enzyme catalyses di-trans,octa-cis-undecaprenyl diphosphate + H2O = di-trans,octa-cis-undecaprenyl phosphate + phosphate + H(+). In terms of biological role, catalyzes the dephosphorylation of undecaprenyl diphosphate (UPP). Confers resistance to bacitracin. In Acidovorax ebreus (strain TPSY) (Diaphorobacter sp. (strain TPSY)), this protein is Undecaprenyl-diphosphatase.